The sequence spans 520 residues: Cobyric acid synthase (520 aa).

One can recognise a GATase cobBQ-type domain in the interval Glu254 to Leu465. Cys335 (nucleophile) is an active-site residue. His457 is a catalytic residue.

This sequence belongs to the CobB/CobQ family. CobQ subfamily.

Its pathway is cofactor biosynthesis; adenosylcobalamin biosynthesis. Functionally, catalyzes amidations at positions B, D, E, and G on adenosylcobyrinic A,C-diamide. NH(2) groups are provided by glutamine, and one molecule of ATP is hydrogenolyzed for each amidation. This chain is Cobyric acid synthase, found in Sorangium cellulosum (strain So ce56) (Polyangium cellulosum (strain So ce56)).